A 113-amino-acid chain; its full sequence is Tyrosine-protein phosphatase 15 (113 aa).

A Tyrosine-protein phosphatase domain is found at Trp1–Ile113.

Belongs to the protein-tyrosine phosphatase family.

The catalysed reaction is O-phospho-L-tyrosyl-[protein] + H2O = L-tyrosyl-[protein] + phosphate. In Styela plicata (Wrinkled sea squirt), this protein is Tyrosine-protein phosphatase 15 (STY-15).